Here is a 575-residue protein sequence, read N- to C-terminus: Delta-selinene-like synthase, chloroplastic (575 aa).

Arg-288, Asp-325, Asp-329, Arg-466, and Asp-469 together coordinate (2E,6E)-farnesyl diphosphate. The Mg(2+) site is built by Asp-325 and Asp-329. A DDXXD motif motif is present at residues 325–329 (DDLYD). Positions 469 and 477 each coordinate Mg(2+).

It belongs to the terpene synthase family. Tpsb subfamily. Monomer. Requires Mg(2+) as cofactor. It depends on Mn(2+) as a cofactor.

The protein localises to the plastid. The protein resides in the chloroplast. It catalyses the reaction (2E,6E)-farnesyl diphosphate = (+)-delta-selinene + diphosphate. It participates in secondary metabolite biosynthesis; terpenoid biosynthesis. It functions in the pathway terpene metabolism; oleoresin biosynthesis. Its function is as follows. Sesquiterpene synthase (sesqui-TPS) involved in the biosynthesis of sesquiterpene natural products. Catalyzes the conversion of (2E)-geranyl diphosphate (GPP) into delta-selinene. This is Delta-selinene-like synthase, chloroplastic from Picea sitchensis (Sitka spruce).